The primary structure comprises 181 residues: Ribulose bisphosphate carboxylase small subunit, chloroplastic 1 (181 aa).

The transit peptide at 1–54 (MASSMLSSAAVVTSPAQATMVAPFTGLKSSSAFPVTRKANNDITSIVSNGGRVS) directs the protein to the chloroplast.

It belongs to the RuBisCO small chain family. In terms of assembly, heterohexadecamer of 8 large and 8 small subunits.

It localises to the plastid. Its subcellular location is the chloroplast. RuBisCO catalyzes two reactions: the carboxylation of D-ribulose 1,5-bisphosphate, the primary event in carbon dioxide fixation, as well as the oxidative fragmentation of the pentose substrate. Both reactions occur simultaneously and in competition at the same active site. Although the small subunit is not catalytic it is essential for maximal activity. The chain is Ribulose bisphosphate carboxylase small subunit, chloroplastic 1 from Brassica napus (Rape).